Consider the following 277-residue polypeptide: Putative pyruvate, phosphate dikinase regulatory protein (277 aa).

151-158 (GISRTSKT) contacts ADP.

It belongs to the pyruvate, phosphate/water dikinase regulatory protein family. PDRP subfamily.

It carries out the reaction N(tele)-phospho-L-histidyl/L-threonyl-[pyruvate, phosphate dikinase] + ADP = N(tele)-phospho-L-histidyl/O-phospho-L-threonyl-[pyruvate, phosphate dikinase] + AMP + H(+). It catalyses the reaction N(tele)-phospho-L-histidyl/O-phospho-L-threonyl-[pyruvate, phosphate dikinase] + phosphate + H(+) = N(tele)-phospho-L-histidyl/L-threonyl-[pyruvate, phosphate dikinase] + diphosphate. Its function is as follows. Bifunctional serine/threonine kinase and phosphorylase involved in the regulation of the pyruvate, phosphate dikinase (PPDK) by catalyzing its phosphorylation/dephosphorylation. The chain is Putative pyruvate, phosphate dikinase regulatory protein from Alkaliphilus oremlandii (strain OhILAs) (Clostridium oremlandii (strain OhILAs)).